The sequence spans 554 residues: Germacrene A synthase (554 aa).

Mg(2+)-binding residues include Asp306, Asp310, Thr453, and Glu457. Positions 306-310 match the DDXXD motif motif; it reads DDTYD.

It belongs to the terpene synthase family. Mg(2+) serves as cofactor.

The protein resides in the cytoplasm. It is found in the cytosol. It catalyses the reaction (2E,6E)-farnesyl diphosphate = (+)-(R)-germacrene A + diphosphate. The protein operates within secondary metabolite biosynthesis; terpenoid biosynthesis. Functionally, sesquiterpene synthase involved in germacrene A biosynthesis. Also produces additional sesquiterpene products, including 4,5-di-epi-aristolochene, eremophilene, alpha-selinene. In Pogostemon cablin (Patchouli), this protein is Germacrene A synthase.